Consider the following 346-residue polypeptide: Heat-inducible transcription repressor HrcA (346 aa).

It belongs to the HrcA family.

Negative regulator of class I heat shock genes (grpE-dnaK-dnaJ and groELS operons). Prevents heat-shock induction of these operons. This Kineococcus radiotolerans (strain ATCC BAA-149 / DSM 14245 / SRS30216) protein is Heat-inducible transcription repressor HrcA.